The chain runs to 362 residues: Phosphoserine aminotransferase (362 aa).

Residues Ser9 and Arg42 each contribute to the L-glutamate site. Pyridoxal 5'-phosphate-binding positions include 76-77 (GR), Trp102, Thr153, Asp174, and Gln197. Position 198 is an N6-(pyridoxal phosphate)lysine (Lys198). Position 239 to 240 (239 to 240 (NT)) interacts with pyridoxal 5'-phosphate.

Belongs to the class-V pyridoxal-phosphate-dependent aminotransferase family. SerC subfamily. As to quaternary structure, homodimer. Requires pyridoxal 5'-phosphate as cofactor.

The protein localises to the cytoplasm. It catalyses the reaction O-phospho-L-serine + 2-oxoglutarate = 3-phosphooxypyruvate + L-glutamate. The enzyme catalyses 4-(phosphooxy)-L-threonine + 2-oxoglutarate = (R)-3-hydroxy-2-oxo-4-phosphooxybutanoate + L-glutamate. Its pathway is amino-acid biosynthesis; L-serine biosynthesis; L-serine from 3-phospho-D-glycerate: step 2/3. It functions in the pathway cofactor biosynthesis; pyridoxine 5'-phosphate biosynthesis; pyridoxine 5'-phosphate from D-erythrose 4-phosphate: step 3/5. Its function is as follows. Catalyzes the reversible conversion of 3-phosphohydroxypyruvate to phosphoserine and of 3-hydroxy-2-oxo-4-phosphonooxybutanoate to phosphohydroxythreonine. The polypeptide is Phosphoserine aminotransferase (Salmonella agona (strain SL483)).